The primary structure comprises 1018 residues: Unconventional myosin-Ig (1018 aa).

Methionine 1 is subject to N-acetylmethionine. In terms of domain architecture, Myosin motor spans 9–707; sequence YGKPDFVLLD…TLVTLEQSRA (699 aa). Position 102–109 (102–109) interacts with ATP; it reads GESGAGKT. Residues 584-606 form an actin-binding region; sequence MVALVENLASKEPFYVRCIKPNE. The IQ domain occupies 710–739; the sequence is IPIIVLLLQKAWRGTLARWRCRRLRAIYTI. Residues 824-1017 form the TH1 domain; sequence GLRQDWGCRR…RGSFTLLWPS (194 aa).

The protein belongs to the TRAFAC class myosin-kinesin ATPase superfamily. Myosin family. In terms of assembly, interacts with calmodulin; via its IQ motifs. As to expression, specifically expressed in hematopoietic cells.

The protein localises to the cell membrane. The protein resides in the cell projection. Its subcellular location is the phagocytic cup. Unconventional myosin required during immune response for detection of rare antigen-presenting cells by regulating T-cell migration. Unconventional myosins are actin-based motor molecules with ATPase activity and serve in intracellular movements. Acts as a regulator of T-cell migration by generating membrane tension, enforcing cell-intrinsic meandering search, thereby enhancing detection of rare antigens during lymph-node surveillance, enabling pathogen eradication. Also required in B-cells, where it regulates different membrane/cytoskeleton-dependent processes. Involved in Fc-gamma receptor (Fc-gamma-R) phagocytosis. Its function is as follows. Constitutes the minor histocompatibility antigen HA-2. More generally, minor histocompatibility antigens (mHags) refer to immunogenic peptide which, when complexed with MHC, can generate an immune response after recognition by specific T-cells. The peptides are derived from polymorphic intracellular proteins, which are cleaved by normal pathways of antigen processing. The binding of these peptides to MHC class I or class II molecules and their expression on the cell surface can stimulate T-cell responses and thereby trigger graft rejection or graft-versus-host disease (GVHD) after hematopoietic stem cell transplantation from HLA-identical sibling donor. GVHD is a frequent complication after bone marrow transplantation (BMT), due to mismatch of minor histocompatibility antigen in HLA-matched sibling marrow transplants. HA-2 is restricted to MHC class I HLA-A*0201. The polypeptide is Unconventional myosin-Ig (MYO1G) (Homo sapiens (Human)).